A 536-amino-acid polypeptide reads, in one-letter code: Phosphoenolpyruvate carboxykinase (ATP) (536 aa).

Substrate contacts are provided by Arg61, Tyr195, and Lys201. ATP-binding positions include Lys201, His220, and 236 to 244; that span reads GLSGTGKTT. Mn(2+) contacts are provided by Lys201 and His220. Position 257 (Asp257) interacts with Mn(2+). ATP-binding residues include Glu285, Arg323, and Thr448. Residue Arg323 coordinates substrate.

It belongs to the phosphoenolpyruvate carboxykinase (ATP) family. Mn(2+) serves as cofactor.

The protein resides in the cytoplasm. It carries out the reaction oxaloacetate + ATP = phosphoenolpyruvate + ADP + CO2. It functions in the pathway carbohydrate biosynthesis; gluconeogenesis. Functionally, involved in the gluconeogenesis. Catalyzes the conversion of oxaloacetate (OAA) to phosphoenolpyruvate (PEP) through direct phosphoryl transfer between the nucleoside triphosphate and OAA. This chain is Phosphoenolpyruvate carboxykinase (ATP), found in Methylobacterium nodulans (strain LMG 21967 / CNCM I-2342 / ORS 2060).